The chain runs to 177 residues: Large ribosomal subunit protein uL6 (177 aa).

It belongs to the universal ribosomal protein uL6 family. In terms of assembly, part of the 50S ribosomal subunit.

Functionally, this protein binds to the 23S rRNA, and is important in its secondary structure. It is located near the subunit interface in the base of the L7/L12 stalk, and near the tRNA binding site of the peptidyltransferase center. In Rickettsia africae (strain ESF-5), this protein is Large ribosomal subunit protein uL6.